Reading from the N-terminus, the 293-residue chain is Ribosomal RNA small subunit methyltransferase A (293 aa).

Asparagine 33, valine 35, glycine 60, glutamate 81, aspartate 111, and asparagine 130 together coordinate S-adenosyl-L-methionine.

Belongs to the class I-like SAM-binding methyltransferase superfamily. rRNA adenine N(6)-methyltransferase family. RsmA subfamily.

It is found in the cytoplasm. It carries out the reaction adenosine(1518)/adenosine(1519) in 16S rRNA + 4 S-adenosyl-L-methionine = N(6)-dimethyladenosine(1518)/N(6)-dimethyladenosine(1519) in 16S rRNA + 4 S-adenosyl-L-homocysteine + 4 H(+). In terms of biological role, specifically dimethylates two adjacent adenosines (A1518 and A1519) in the loop of a conserved hairpin near the 3'-end of 16S rRNA in the 30S particle. May play a critical role in biogenesis of 30S subunits. This chain is Ribosomal RNA small subunit methyltransferase A, found in Corynebacterium glutamicum (strain ATCC 13032 / DSM 20300 / JCM 1318 / BCRC 11384 / CCUG 27702 / LMG 3730 / NBRC 12168 / NCIMB 10025 / NRRL B-2784 / 534).